We begin with the raw amino-acid sequence, 23 residues long: Paralytic peptide 2 (23 aa).

A disulfide bond links Cys7 and Cys19.

The protein belongs to the GBP/PSP1/paralytic peptide family. As to expression, hemolymph.

Functionally, causes rapid, rigid paralysis when injected into Lepidopteran larvae. The physiological role may be to reduce hemolymph loss following injury and promote wound healing. This chain is Paralytic peptide 2, found in Manduca sexta (Tobacco hawkmoth).